The chain runs to 327 residues: Delta(3,5)-Delta(2,4)-dienoyl-CoA isomerase, mitochondrial (327 aa).

The N-terminal 33 residues, 1–33, are a transit peptide targeting the mitochondrion; sequence MATAMTVSSKLRGLLMQQLRGTSQLYFNISLRS. A substrate-binding site is contributed by 115–119; it reads SGIDL. Lysine 147 carries the post-translational modification N6-acetyllysine. Glycine 173 is a binding site for substrate. Lysine 230 is modified (N6-succinyllysine). Serine 267 carries the post-translational modification Phosphoserine. Position 316 is an N6-succinyllysine (lysine 316). Positions 325–327 match the Microbody targeting signal motif; sequence SKL. N6-acetyllysine is present on lysine 326.

Belongs to the enoyl-CoA hydratase/isomerase family. In terms of assembly, homohexamer.

It is found in the mitochondrion. It localises to the peroxisome. The enzyme catalyses (3E,5Z)-octadienoyl-CoA = (2E,4E)-octadienoyl-CoA. It catalyses the reaction (3E,5Z,8Z,11Z,14Z)-eicosapentaenoyl-CoA = (2E,4E,8Z,11Z,14Z)-eicosapentaenoyl-CoA. Its pathway is lipid metabolism; fatty acid beta-oxidation. In terms of biological role, isomerization of 3-trans,5-cis-dienoyl-CoA to 2-trans,4-trans-dienoyl-CoA. The chain is Delta(3,5)-Delta(2,4)-dienoyl-CoA isomerase, mitochondrial from Mus musculus (Mouse).